We begin with the raw amino-acid sequence, 382 residues long: Ferredoxin--NADP reductase, root isozyme 2, chloroplastic (382 aa).

The transit peptide at 1–64 (MSHSAVSQAG…DGKRYPSTTI (64 aa)) directs the protein to the chloroplast. An FAD-binding FR-type domain is found at 97-225 (KESYTAKIVS…TGPSGKVMLL (129 aa)). An intrachain disulfide couples cysteine 200 to cysteine 205. Serine 201 is modified (phosphoserine). Threonine 233 carries the post-translational modification Phosphothreonine. Residue 235–253 (IMIATGTGVAPYRGYLRRM) coordinates NADP(+).

The protein belongs to the ferredoxin--NADP reductase type 1 family. The cofactor is FAD. As to expression, expressed in shoots and roots. More abundant in roots than RFNR1.

Its subcellular location is the plastid. The protein resides in the chloroplast. It carries out the reaction 2 reduced [2Fe-2S]-[ferredoxin] + NADP(+) + H(+) = 2 oxidized [2Fe-2S]-[ferredoxin] + NADPH. Its function is as follows. Maintains the supply of reduced ferredoxin under non-photosynthetic conditions. This Arabidopsis thaliana (Mouse-ear cress) protein is Ferredoxin--NADP reductase, root isozyme 2, chloroplastic (RFNR2).